The sequence spans 98 residues: PE family immunomodulator PE35 (98 aa).

The region spanning 1 to 90 (MEKMSHDPIA…DVARTYSQID (90 aa)) is the PE domain.

Belongs to the mycobacterial PE family. In terms of assembly, interacts with PPE68. PE35/PPE68 complex interacts with human TLR2.

Its subcellular location is the secreted. It is found in the cell surface. In terms of biological role, plays a major role in RD1-associated pathogenesis, and may contribute to the establishment and maintenance of M.tuberculosis infection. Together with PPE68, stimulates the secretion of IL-10 and MCP-1 from human macrophages, via the interaction with human Toll-like receptor 2 (TLR2). This Mycobacterium tuberculosis (strain CDC 1551 / Oshkosh) protein is PE family immunomodulator PE35 (PE35).